Here is a 737-residue protein sequence, read N- to C-terminus: Alpha-adducin (737 aa).

Met-1 carries the N-acetylmethionine modification. The segment at 1 to 21 (MNGDSRAAVVTSPPPTTAPHK) is disordered. The residue at position 12 (Ser-12) is a Phosphoserine. A Phosphoserine; by PKA modification is found at Ser-59. A Phosphoserine modification is found at Ser-64. Thr-331 carries the phosphothreonine modification. Phosphoserine occurs at positions 334, 353, 355, 358, and 366. Ser-408 is subject to Phosphoserine; by PKA. Disordered stretches follow at residues 421–486 (FASD…SAVP) and 576–737 (RREV…KSDS). Ser-427 bears the Phosphoserine mark. A Phosphothreonine modification is found at Thr-429. Ser-431 bears the Phosphoserine mark. At Ser-436 the chain carries Phosphoserine; by PKA. The residue at position 445 (Thr-445) is a Phosphothreonine; by ROCK2. A phosphoserine mark is found at Ser-464 and Ser-465. Thr-480 carries the post-translational modification Phosphothreonine; by ROCK2. Phosphoserine; by PKA is present on Ser-481. Residues 576–601 (RREVERKQKGSEENLDEAREQKEKSP) show a composition bias toward basic and acidic residues. Residues Ser-586, Ser-600, and Ser-613 each carry the phosphoserine modification. A compositionally biased stretch (pro residues) spans 602–614 (PDQPAVPHPPPST). At Thr-614 the chain carries Phosphothreonine. 4 positions are modified to phosphoserine: Ser-678, Ser-707, Ser-710, and Ser-714. Residues 687 to 714 (PVAEEAAPSAVEEGAAADPGSDGSPGKS) are compositionally biased toward low complexity. The segment covering 715–737 (PSKKKKKFRTPSFLKKSKKKSDS) has biased composition (basic residues). A Phosphoserine; by PKC modification is found at Ser-716. The tract at residues 717–734 (KKKKKFRTPSFLKKSKKK) is interaction with calmodulin. Ser-726 bears the Phosphoserine; by PKA and PKC mark.

The protein belongs to the aldolase class II family. Adducin subfamily. In terms of assembly, heterodimer of an alpha and a beta subunit or an alpha and a gamma subunit. In terms of tissue distribution, expressed in all tissues. Found in much higher levels in reticulocytes than the beta subunit.

It localises to the cytoplasm. The protein resides in the cytoskeleton. Its subcellular location is the cell membrane. Functionally, membrane-cytoskeleton-associated protein that promotes the assembly of the spectrin-actin network. Binds to calmodulin. The chain is Alpha-adducin (ADD1) from Homo sapiens (Human).